A 515-amino-acid chain; its full sequence is Histone-lysine N-methyltransferase SET5 (515 aa).

The SET domain occupies 114–386; it reads SKVEIRECEE…KDEELVTTYV (273 aa). Residues 452-462 are compositionally biased toward polar residues; the sequence is ALQRSNGGSSS. The interval 452–476 is disordered; it reads ALQRSNGGSSSDLRRKSSIRNRKPD.

It belongs to the class V-like SAM-binding methyltransferase superfamily. Histone-lysine methyltransferase family. SET5 subfamily.

The protein localises to the nucleus. It is found in the chromosome. Its subcellular location is the cytoplasm. The catalysed reaction is L-lysyl-[histone] + S-adenosyl-L-methionine = N(6)-methyl-L-lysyl-[histone] + S-adenosyl-L-homocysteine + H(+). Its function is as follows. Histone methyltransferase that monomethylates 'Lys-5', 'Lys-8' and 'Lys-12' of histone H4 (H4K5me1, H4K8me1 and H4K12me1, respectively), thereby controlling gene expression and remodeling chromatin structures. This is Histone-lysine N-methyltransferase SET5 (SET5) from Candida glabrata (strain ATCC 2001 / BCRC 20586 / JCM 3761 / NBRC 0622 / NRRL Y-65 / CBS 138) (Yeast).